The primary structure comprises 21 residues: Dahlein-5.2 (21 aa).

In terms of tissue distribution, expressed by the skin dorsal glands.

The protein localises to the secreted. Its function is as follows. Has no antimicrobial activity. Strongly inhibits the formation of NO by neuronal nitric oxide synthase at micromolar concentrations. This is Dahlein-5.2 from Ranoidea dahlii (Dahl's aquatic frog).